Here is a 551-residue protein sequence, read N- to C-terminus: Podocalyxin (551 aa).

Positions 1–21 (MRSALALAALLLLLLSPPSLS) are cleaved as a signal peptide. Residues 18–324 (PSLSQEKSPQ…QRVSCGPPER (307 aa)) form a disordered region. Residues 22–452 (QEKSPQPGPT…PPEETEDRFS (431 aa)) lie on the Extracellular side of the membrane. A compositionally biased stretch (low complexity) spans 32 to 59 (PMATSTSTRPAPASAPAPKSSVAASVPA). The span at 60–90 (EQNTTPMTTKAPATQSPSASPGSSVENSAPA) shows a compositional bias: polar residues. Positions 91–104 (QGSTTTQQSLSVTT) are enriched in low complexity. The span at 142 to 164 (APSNHSITTKPLATEATSQAPRQ) shows a compositional bias: polar residues. Residues Asn145 and Asn180 are each glycosylated (N-linked (GlcNAc...) asparagine). Residues 234 to 244 (PVASSAETQGM) show a composition bias toward polar residues. Residues 289 to 300 (TSSSTELASTAL) show a composition bias toward low complexity. A glycan (N-linked (GlcNAc...) asparagine) is linked at Asn333. A helical membrane pass occupies residues 453-473 (LPLIITIVCMASFLLLVAALY). Residues 474–551 (GCCHQRLSHR…DLDEEEDTHL (78 aa)) lie on the Cytoplasmic side of the membrane. The residue at position 511 (Thr511) is a Phosphothreonine. The residue at position 530 (Ser530) is a Phosphoserine. The residue at position 549 (Thr549) is a Phosphothreonine.

The protein belongs to the podocalyxin family. Monomer; when associated with the membrane raft. Oligomer; when integrated in the apical membrane. Found in a complex with EZR, PODXL and NHERF2. Associates with the actin cytoskeleton through complex formation with EZR and NHERF2. Interacts (via the C-terminal PDZ-binding motif DTHL) with NHERF1 (via the PDZ domains); interaction is not detected in glomerular epithelium cells, take place early in the secretory pathway and is necessary for its apical membrane sorting. Interacts (via the C-terminal PDZ-binding motif DTHL) with NHERF2 (via the PDZ 1 domain); interaction is detected in glomerular epithelium cells. Interacts with EZR. N- and O-linked glycosylated. Sialoglycoprotein. As to expression, glomerular epithelium cell (podocyte) and endothelial cells.

The protein localises to the apical cell membrane. It localises to the cell projection. Its subcellular location is the microvillus. It is found in the membrane raft. The protein resides in the lamellipodium. The protein localises to the filopodium. It localises to the ruffle. Its subcellular location is the membrane. In terms of biological role, involved in the regulation of both adhesion and cell morphology and cancer progression. Functions as an anti-adhesive molecule that maintains an open filtration pathway between neighboring foot processes in the podocyte by charge repulsion. Acts as a pro-adhesive molecule, enhancing the adherence of cells to immobilized ligands, increasing the rate of migration and cell-cell contacts in an integrin-dependent manner. Induces the formation of apical actin-dependent microvilli. Involved in the formation of a preapical plasma membrane subdomain to set up initial epithelial polarization and the apical lumen formation during renal tubulogenesis. Plays a role in cancer development and aggressiveness by inducing cell migration and invasion through its interaction with the actin-binding protein EZR. Affects EZR-dependent signaling events, leading to increased activities of the MAPK and PI3K pathways in cancer cells. This is Podocalyxin (PODXL) from Oryctolagus cuniculus (Rabbit).